Here is a 315-residue protein sequence, read N- to C-terminus: Zinc finger CCCH domain-containing protein 23 (315 aa).

The segment at Met-1–Gln-21 is disordered. 2 consecutive C3H1-type zinc fingers follow at residues Tyr-131–Phe-157 and Arg-165–Glu-189.

The sequence is that of Zinc finger CCCH domain-containing protein 23 from Arabidopsis thaliana (Mouse-ear cress).